A 592-amino-acid polypeptide reads, in one-letter code: Arginine--tRNA ligase (592 aa).

Positions 134 to 144 (ANPTGPLHVGH) match the 'HIGH' region motif.

This sequence belongs to the class-I aminoacyl-tRNA synthetase family. Monomer.

It localises to the cytoplasm. It carries out the reaction tRNA(Arg) + L-arginine + ATP = L-arginyl-tRNA(Arg) + AMP + diphosphate. The polypeptide is Arginine--tRNA ligase (Coxiella burnetii (strain RSA 493 / Nine Mile phase I)).